The sequence spans 310 residues: Signal peptidase I (310 aa).

A helical transmembrane segment spans residues 5–25 (LSSFLLASSLITGTLWIINKI). Over 26–57 (LSHNLLDSKIPFNIKKSKIYYKSKQVVQTFAS) the chain is Cytoplasmic. Residues 58–78 (FFPILIIVFIIRTFICEPFQI) traverse the membrane as a helical segment. Over 79–310 (PSESMMPTLL…IQFDRIGNIY (232 aa)) the chain is Extracellular. Catalysis depends on residues serine 82 and lysine 137.

This sequence belongs to the peptidase S26 family.

It is found in the cell membrane. It catalyses the reaction Cleavage of hydrophobic, N-terminal signal or leader sequences from secreted and periplasmic proteins.. This Buchnera aphidicola subsp. Baizongia pistaciae (strain Bp) protein is Signal peptidase I (lepB).